The following is a 625-amino-acid chain: Phosphomethylpyrimidine synthase (625 aa).

Substrate contacts are provided by residues asparagine 230, methionine 259, tyrosine 288, histidine 324, serine 344–glycine 346, aspartate 385–arginine 388, and glutamate 424. Histidine 428 contacts Zn(2+). Tyrosine 451 is a substrate binding site. Zn(2+) is bound at residue histidine 492. [4Fe-4S] cluster is bound by residues cysteine 572, cysteine 575, and cysteine 580.

Belongs to the ThiC family. In terms of assembly, homodimer. The cofactor is [4Fe-4S] cluster.

It carries out the reaction 5-amino-1-(5-phospho-beta-D-ribosyl)imidazole + S-adenosyl-L-methionine = 4-amino-2-methyl-5-(phosphooxymethyl)pyrimidine + CO + 5'-deoxyadenosine + formate + L-methionine + 3 H(+). It participates in cofactor biosynthesis; thiamine diphosphate biosynthesis. Its function is as follows. Catalyzes the synthesis of the hydroxymethylpyrimidine phosphate (HMP-P) moiety of thiamine from aminoimidazole ribotide (AIR) in a radical S-adenosyl-L-methionine (SAM)-dependent reaction. The chain is Phosphomethylpyrimidine synthase from Xanthomonas campestris pv. campestris (strain 8004).